The chain runs to 947 residues: Protein translocase subunit SecA 1 (947 aa).

ATP-binding positions include glutamine 83, glycine 101–threonine 105, and aspartate 490. Residues alanine 860–glycine 947 are disordered. Positions threonine 925 to arginine 934 are enriched in basic and acidic residues. The span at lysine 935 to glycine 947 shows a compositional bias: basic residues.

It belongs to the SecA family. In terms of assembly, monomer and homodimer. Part of the essential Sec protein translocation apparatus which comprises SecA, SecYEG and auxiliary proteins SecDF. Other proteins may also be involved.

The protein resides in the cell membrane. Its subcellular location is the cytoplasm. It catalyses the reaction ATP + H2O + cellular proteinSide 1 = ADP + phosphate + cellular proteinSide 2.. Part of the Sec protein translocase complex. Interacts with the SecYEG preprotein conducting channel. Has a central role in coupling the hydrolysis of ATP to the transfer of proteins into and across the cell membrane, serving as an ATP-driven molecular motor driving the stepwise translocation of polypeptide chains across the membrane. This is Protein translocase subunit SecA 1 from Mycobacterium sp. (strain KMS).